We begin with the raw amino-acid sequence, 252 residues long: Probable transcriptional regulatory protein THA_1246 (252 aa).

The protein belongs to the TACO1 family.

It is found in the cytoplasm. This is Probable transcriptional regulatory protein THA_1246 from Thermosipho africanus (strain TCF52B).